Consider the following 93-residue polypeptide: Sec-independent protein translocase protein TatA (93 aa).

A helical membrane pass occupies residues 1–21; the sequence is MGIFDWKHWIVILVVVVLVFG. The interval 43-93 is disordered; that stretch reads MNDDEKPAEPVVPPAAQPVPPVQPQQSAPLNQPHTIDVQAQKVEEPTRKDS. Pro residues predominate over residues 52–65; it reads PVVPPAAQPVPPVQ. The span at 84–93 shows a compositional bias: basic and acidic residues; that stretch reads KVEEPTRKDS.

It belongs to the TatA/E family. In terms of assembly, the Tat system comprises two distinct complexes: a TatABC complex, containing multiple copies of TatA, TatB and TatC subunits, and a separate TatA complex, containing only TatA subunits. Substrates initially bind to the TatABC complex, which probably triggers association of the separate TatA complex to form the active translocon.

It localises to the cell inner membrane. In terms of biological role, part of the twin-arginine translocation (Tat) system that transports large folded proteins containing a characteristic twin-arginine motif in their signal peptide across membranes. TatA could form the protein-conducting channel of the Tat system. This chain is Sec-independent protein translocase protein TatA, found in Pseudomonas fluorescens (strain ATCC BAA-477 / NRRL B-23932 / Pf-5).